A 115-amino-acid chain; its full sequence is NADH-ubiquinone oxidoreductase chain 3 (115 aa).

A run of 3 helical transmembrane segments spans residues L3–W23, F55–L75, and L84–Y104.

The protein belongs to the complex I subunit 3 family. Core subunit of respiratory chain NADH dehydrogenase (Complex I) which is composed of 45 different subunits. Interacts with TMEM186. Interacts with TMEM242.

Its subcellular location is the mitochondrion inner membrane. The catalysed reaction is a ubiquinone + NADH + 5 H(+)(in) = a ubiquinol + NAD(+) + 4 H(+)(out). Core subunit of the mitochondrial membrane respiratory chain NADH dehydrogenase (Complex I) which catalyzes electron transfer from NADH through the respiratory chain, using ubiquinone as an electron acceptor. Essential for the catalytic activity of complex I. The polypeptide is NADH-ubiquinone oxidoreductase chain 3 (Ovis aries (Sheep)).